We begin with the raw amino-acid sequence, 482 residues long: UDP-N-acetylmuramate--L-alanine ligase (482 aa).

122-128 (GTHGKTT) serves as a coordination point for ATP.

It belongs to the MurCDEF family.

It is found in the cytoplasm. It carries out the reaction UDP-N-acetyl-alpha-D-muramate + L-alanine + ATP = UDP-N-acetyl-alpha-D-muramoyl-L-alanine + ADP + phosphate + H(+). The protein operates within cell wall biogenesis; peptidoglycan biosynthesis. Its function is as follows. Cell wall formation. This Mycolicibacterium smegmatis (strain ATCC 700084 / mc(2)155) (Mycobacterium smegmatis) protein is UDP-N-acetylmuramate--L-alanine ligase.